The following is a 721-amino-acid chain: DNA ligase (721 aa).

Residues 39 to 43, 89 to 90, and E123 each bind NAD(+); these read DAEYD and SL. Catalysis depends on K125, which acts as the N6-AMP-lysine intermediate. NAD(+) contacts are provided by R146, E186, K302, and K326. Zn(2+) contacts are provided by C418, C421, C436, and C442. The tract at residues 556-588 is disordered; the sequence is QASSAAREGEPANADGAYDPATVTPDSDTAGAE. Residues 641-721 form the BRCT domain; the sequence is TKDSAVAGKT…AWAEIVRQAG (81 aa).

Belongs to the NAD-dependent DNA ligase family. LigA subfamily. It depends on Mg(2+) as a cofactor. Mn(2+) serves as cofactor.

The enzyme catalyses NAD(+) + (deoxyribonucleotide)n-3'-hydroxyl + 5'-phospho-(deoxyribonucleotide)m = (deoxyribonucleotide)n+m + AMP + beta-nicotinamide D-nucleotide.. Functionally, DNA ligase that catalyzes the formation of phosphodiester linkages between 5'-phosphoryl and 3'-hydroxyl groups in double-stranded DNA using NAD as a coenzyme and as the energy source for the reaction. It is essential for DNA replication and repair of damaged DNA. The protein is DNA ligase of Novosphingobium aromaticivorans (strain ATCC 700278 / DSM 12444 / CCUG 56034 / CIP 105152 / NBRC 16084 / F199).